The chain runs to 134 residues: Two-component response regulator ORR5 (134 aa).

The 118-residue stretch at 16 to 133 (HVLAVDDSSV…DVSRLCSRVL (118 aa)) folds into the Response regulatory domain. Aspartate 66 bears the 4-aspartylphosphate mark.

The protein belongs to the ARR family. Type-A subfamily. Post-translationally, two-component system major event consists of a His-to-Asp phosphorelay between a sensor histidine kinase (HK) and a response regulator (RR). In plants, the His-to-Asp phosphorelay involves an additional intermediate named Histidine-containing phosphotransfer protein (HPt). This multistep phosphorelay consists of a His-Asp-His-Asp sequential transfer of a phosphate group between first a His and an Asp of the HK protein, followed by the transfer to a conserved His of the HPt protein and finally the transfer to an Asp in the receiver domain of the RR protein. In terms of tissue distribution, expressed in mature leaves and shoots, and at low levels in roots and flowers.

In terms of biological role, functions as a response regulator involved in His-to-Asp phosphorelay signal transduction system. Phosphorylation of the Asp residue in the receiver domain activates the ability of the protein to promote the transcription of target genes. Type-A response regulators seem to act as negative regulators of the cytokinin signaling. In Oryza sativa subsp. indica (Rice), this protein is Two-component response regulator ORR5.